An 89-amino-acid polypeptide reads, in one-letter code: Small ribosomal subunit protein uS15 (89 aa).

Residues 1–24 form a disordered region; the sequence is MALTQTKKQELISQYQAHETDTGS.

This sequence belongs to the universal ribosomal protein uS15 family. As to quaternary structure, part of the 30S ribosomal subunit. Forms a bridge to the 50S subunit in the 70S ribosome, contacting the 23S rRNA.

One of the primary rRNA binding proteins, it binds directly to 16S rRNA where it helps nucleate assembly of the platform of the 30S subunit by binding and bridging several RNA helices of the 16S rRNA. Functionally, forms an intersubunit bridge (bridge B4) with the 23S rRNA of the 50S subunit in the ribosome. The chain is Small ribosomal subunit protein uS15 from Microcystis aeruginosa (strain NIES-843 / IAM M-2473).